Consider the following 316-residue polypeptide: Probable peptidyl-tRNA hydrolase 2 (316 aa).

Positions 1–127 (MSENIPDIDP…SHPVDPQEPN (127 aa)) are disordered. Polar residues predominate over residues 44 to 53 (PTPSSVTVDN). Residues 75 to 89 (IPEVPIPSSAISISS) show a composition bias toward low complexity. Positions 128 to 169 (EVNNEYLAHLLDLGFDEYTAVLALKRTNSAGVEQAVAWIVER) constitute a UBA domain. The interval 170-193 (SNESDFDEDSSSSENEADEEMGAV) is disordered. Acidic residues predominate over residues 173–190 (SDFDEDSSSSENEADEEM).

Belongs to the PTH2 family.

The catalysed reaction is an N-acyl-L-alpha-aminoacyl-tRNA + H2O = an N-acyl-L-amino acid + a tRNA + H(+). Functionally, the natural substrate for this enzyme may be peptidyl-tRNAs which drop off the ribosome during protein synthesis. The polypeptide is Probable peptidyl-tRNA hydrolase 2 (Caenorhabditis elegans).